A 396-amino-acid polypeptide reads, in one-letter code: S-adenosylmethionine synthase (396 aa).

H16 is an ATP binding site. Mg(2+) is bound at residue D18. E44 lines the K(+) pocket. Residues E57 and Q100 each contribute to the L-methionine site. The tract at residues 100–110 (QSQDIARGVDN) is flexible loop. Residues 162 to 164 (DGK), 228 to 229 (RF), D237, 243 to 244 (RK), A260, and K264 contribute to the ATP site. Position 237 (D237) interacts with L-methionine. K268 contributes to the L-methionine binding site.

This sequence belongs to the AdoMet synthase family. Homotetramer; dimer of dimers. The cofactor is Mg(2+). It depends on K(+) as a cofactor.

It localises to the cytoplasm. The enzyme catalyses L-methionine + ATP + H2O = S-adenosyl-L-methionine + phosphate + diphosphate. It participates in amino-acid biosynthesis; S-adenosyl-L-methionine biosynthesis; S-adenosyl-L-methionine from L-methionine: step 1/1. Its function is as follows. Catalyzes the formation of S-adenosylmethionine (AdoMet) from methionine and ATP. The overall synthetic reaction is composed of two sequential steps, AdoMet formation and the subsequent tripolyphosphate hydrolysis which occurs prior to release of AdoMet from the enzyme. This chain is S-adenosylmethionine synthase, found in Myxococcus xanthus (strain DK1622).